The following is a 159-amino-acid chain: Probable NADH dehydrogenase [ubiquinone] 1 alpha subcomplex subunit 12 (159 aa).

Belongs to the complex I NDUFA12 subunit family. As to quaternary structure, complex I is composed of at least 49 different subunits.

The protein resides in the mitochondrion inner membrane. In terms of biological role, accessory subunit of the mitochondrial membrane respiratory chain NADH dehydrogenase (Complex I), that is believed not to be involved in catalysis. Complex I functions in the transfer of electrons from NADH to the respiratory chain. The immediate electron acceptor for the enzyme is believed to be ubiquinone. This is Probable NADH dehydrogenase [ubiquinone] 1 alpha subcomplex subunit 12 from Arabidopsis thaliana (Mouse-ear cress).